Consider the following 84-residue polypeptide: Putative membrane protein insertion efficiency factor (84 aa).

Belongs to the UPF0161 family.

Its subcellular location is the cell inner membrane. Its function is as follows. Could be involved in insertion of integral membrane proteins into the membrane. In Nostoc sp. (strain PCC 7120 / SAG 25.82 / UTEX 2576), this protein is Putative membrane protein insertion efficiency factor.